We begin with the raw amino-acid sequence, 274 residues long: UPF0758 protein RHE_CH01848 (274 aa).

The disordered stretch occupies residues 1-37; it reads MAKGPVATSSDDELPFETEEPVADERSFFGGRPQKPA. A compositionally biased stretch (acidic residues) spans 10–22; sequence SDDELPFETEEPV. An MPN domain is found at 152-274; the sequence is VLSSWSSVIQ…HVSLKGLKLI (123 aa). Zn(2+)-binding residues include H223, H225, and D236. A JAMM motif motif is present at residues 223 to 236; the sequence is HNHPSGDPTPSRAD.

It belongs to the UPF0758 family.

The chain is UPF0758 protein RHE_CH01848 from Rhizobium etli (strain ATCC 51251 / DSM 11541 / JCM 21823 / NBRC 15573 / CFN 42).